The chain runs to 1081 residues: Zinc finger protein 827 (1081 aa).

The segment covering 1-10 (MPRRKQEQPK) has biased composition (basic and acidic residues). Positions 1 to 14 (MPRRKQEQPKRLPS) are mediates direct interaction with RBBP4. Residues 1–77 (MPRRKQEQPK…DTSLGSTTPS (77 aa)) are disordered. Positions 3–5 (RRK) match the RRK motif; mediates NuRD recruitment to telomeres motif. Positions 62-77 (EQSTSPDTSLGSTTPS) are enriched in polar residues. Glycyl lysine isopeptide (Lys-Gly) (interchain with G-Cter in SUMO2) cross-links involve residues lysine 176, lysine 216, and lysine 226. Disordered regions lie at residues 259–278 (KVSE…ASSF) and 307–348 (SSLL…SLEL). Pro residues predominate over residues 327–344 (VTPPPPPPPPPPPPPPPQ). Glycyl lysine isopeptide (Lys-Gly) (interchain with G-Cter in SUMO2) cross-links involve residues lysine 360 and lysine 372. 3 consecutive C2H2-type zinc fingers follow at residues 374–396 (FQCP…MVIH), 402–424 (HQCP…MKVH), and 433–455 (FQCQ…MRCH). Glycyl lysine isopeptide (Lys-Gly) (interchain with G-Cter in SUMO2) cross-links involve residues lysine 466, lysine 475, lysine 523, lysine 549, lysine 580, lysine 587, lysine 597, lysine 634, lysine 639, and lysine 658. A Glycyl lysine isopeptide (Lys-Gly) (interchain with G-Cter in SUMO1); alternate cross-link involves residue lysine 673. Lysine 673 is covalently cross-linked (Glycyl lysine isopeptide (Lys-Gly) (interchain with G-Cter in SUMO2); alternate). Residues lysine 704, lysine 710, lysine 742, lysine 778, and lysine 798 each participate in a glycyl lysine isopeptide (Lys-Gly) (interchain with G-Cter in SUMO2) cross-link. 2 C2H2-type zinc fingers span residues 817 to 839 (FPCD…LSLH) and 845 to 867 (YKCH…LTVH). Glycyl lysine isopeptide (Lys-Gly) (interchain with G-Cter in SUMO2) cross-links involve residues lysine 870 and lysine 891. 2 consecutive C2H2-type zinc fingers follow at residues 897–919 (YSCH…MSLH) and 929–952 (ICCT…GTKH). Residues 947–960 (HIGTKHTGEDRKTP) show a composition bias toward basic and acidic residues. The tract at residues 947-996 (HIGTKHTGEDRKTPSESNSPSSSSLSALSDSANSKDDSDGSQKNKGGNNL) is disordered. Residue lysine 958 forms a Glycyl lysine isopeptide (Lys-Gly) (interchain with G-Cter in SUMO2) linkage. Over residues 961 to 978 (SESNSPSSSSLSALSDSA) the composition is skewed to low complexity. Positions 979 to 988 (NSKDDSDGSQ) are enriched in basic and acidic residues. Residue lysine 1014 forms a Glycyl lysine isopeptide (Lys-Gly) (interchain with G-Cter in SUMO2) linkage. C2H2-type zinc fingers lie at residues 1019-1041 (FECV…LQIH) and 1047-1069 (FECD…KKCH).

It belongs to the krueppel C2H2-type zinc-finger protein family. As to quaternary structure, part of a transcription inhibitory ribonucleoprotein complex composed at least of the circular RNA circZNF827, HNRNPK and HNRNPL. Interacts with the nucleosome remodeling and histone deacetylase/NuRD complex. Interacts with RBBP4; the interaction is direct and recruits RBBP4, a component of the NuRD complex, to telomeres.

The protein localises to the nucleus. Its subcellular location is the chromosome. It localises to the telomere. Its function is as follows. As part of a ribonucleoprotein complex composed at least of HNRNPK, HNRNPL and the circular RNA circZNF827 that nucleates the complex on chromatin, may negatively regulate the transcription of genes involved in neuronal differentiation. Could also recruit the nucleosome remodeling and histone deacetylase/NuRD complex to telomeric regions of chromosomes to regulate chromatin remodeling as part of telomere maintenance. The chain is Zinc finger protein 827 (ZNF827) from Homo sapiens (Human).